A 358-amino-acid polypeptide reads, in one-letter code: Mannonate dehydratase (358 aa).

Belongs to the mannonate dehydratase family. Fe(2+) serves as cofactor. The cofactor is Mn(2+).

The catalysed reaction is D-mannonate = 2-dehydro-3-deoxy-D-gluconate + H2O. It functions in the pathway carbohydrate metabolism; pentose and glucuronate interconversion. Catalyzes the dehydration of D-mannonate. The protein is Mannonate dehydratase of Lactococcus lactis subsp. lactis (strain IL1403) (Streptococcus lactis).